Consider the following 142-residue polypeptide: Large ribosomal subunit protein uL11 (142 aa).

The protein belongs to the universal ribosomal protein uL11 family. Part of the ribosomal stalk of the 50S ribosomal subunit. Interacts with L10 and the large rRNA to form the base of the stalk. L10 forms an elongated spine to which L12 dimers bind in a sequential fashion forming a multimeric L10(L12)X complex. One or more lysine residues are methylated.

In terms of biological role, forms part of the ribosomal stalk which helps the ribosome interact with GTP-bound translation factors. In Mycoplasma capricolum subsp. capricolum (strain California kid / ATCC 27343 / NCTC 10154), this protein is Large ribosomal subunit protein uL11.